The sequence spans 376 residues: Delta(12) fatty acid desaturase fat-2 (376 aa).

The next 4 membrane-spanning stretches (helical) occupy residues 45-65, 69-89, 203-223, and 228-248; these read ISYLIKDYVLLAGLYFAVPYI, LGWIGLLGWYWAMGIVGSALF, VKCAVSGVACAICAYIAFVLC, and YTFVKYYYIPLLFQGLILVII.

It belongs to the fatty acid desaturase type 1 family.

The protein resides in the membrane. It catalyses the reaction (9Z)-octadecenoyl-CoA + 2 Fe(II)-[cytochrome b5] + O2 + 2 H(+) = (9Z,12Z)-octadecadienoyl-CoA + 2 Fe(III)-[cytochrome b5] + 2 H2O. The enzyme catalyses (9Z)-hexadecenoyl-CoA + 2 Fe(II)-[cytochrome b5] + O2 + 2 H(+) = (9Z,12Z)-hexadecadienoyl-CoA + 2 Fe(III)-[cytochrome b5] + 2 H2O. The catalysed reaction is (9Z,12Z)-octadecadienoyl-CoA + 2 Fe(II)-[cytochrome b5] + O2 + 2 H(+) = (9Z,12Z,15Z)-octadecatrienoyl-CoA + 2 Fe(III)-[cytochrome b5] + 2 H2O. It carries out the reaction (9Z)-heptadecenoyl-CoA + 2 Fe(II)-[cytochrome b5] + O2 + 2 H(+) = (9Z,12Z)-heptadecadienoyl-CoA + 2 Fe(III)-[cytochrome b5] + 2 H2O. It catalyses the reaction (9Z)-pentadecenoyl-CoA + 2 Fe(II)-[cytochrome b5] + O2 + 2 H(+) = (9Z,12Z)-pentadecadienoyl-CoA + 2 Fe(III)-[cytochrome b5] + 2 H2O. The enzyme catalyses (6Z,9Z,12Z)-octadecatrienoyl-CoA + 2 Fe(II)-[cytochrome b5] + O2 + 2 H(+) = (6Z,9Z,12Z,15Z)-octadecatetraenoyl-CoA + 2 Fe(III)-[cytochrome b5] + 2 H2O. The catalysed reaction is (9Z)-tetradecenoyl-CoA + 2 Fe(II)-[cytochrome b5] + O2 + 2 H(+) = (9Z,12Z)-tetradecadienoyl-CoA + 2 Fe(III)-[cytochrome b5] + 2 H2O. Its pathway is lipid metabolism; polyunsaturated fatty acid biosynthesis. Functionally, can function as a Delta(12)/Delta(15) bifunctional desaturase and behaves as a nu +3' desaturase. Introduces a double bond in the fatty acid chain three carbons away from an existing double bond to biosynthesize polyunsaturated fatty acids (PUFAs) endogenously (PUFAs are essential for membrane structure and many cellular and physiological processes). Acts on a number of substrates like oleoyl-CoA ((9Z)-octadecenoyl-CoA, 18:1n-9), palmitoleoyl-CoA ((9Z)-hexadecenoyl-CoA, 16:1n-7), and gamma-linolenoyl-CoA ((6Z,9Z,12Z)-octadecatrienoyl-CoA, 18:3n-6), to generate linoleoyl-CoA ((9Z,12Z)-octadecadienoyl-CoA, 18:2n-6), (9Z,12Z)-hexadecadienoyl-CoA (16:2n-4) and (6Z,9Z,12Z,15Z)-octadecatetraenoyl-CoA (18:4n-3) respectively. Unlike plants, Caenorhabditis elegans desaturases seem to use fatty acyl-CoAs as substrates. The protein is Delta(12) fatty acid desaturase fat-2 (fat-2) of Caenorhabditis elegans.